The sequence spans 472 residues: Adenylyl cyclase-associated protein 1 (472 aa).

The residue at position 2 (alanine 2) is an N-acetylalanine. Phosphotyrosine is present on tyrosine 31. Position 34 is a phosphoserine (serine 34). Lysine 81 carries the post-translational modification N6-acetyllysine. The segment at 216–253 is disordered; the sequence is ELSGLPSGPSAGSGPPPPPPGPPPPPVPTSSGSDDSAS. Residues 218 to 228 show a composition bias toward low complexity; it reads SGLPSGPSAGS. The segment covering 229-243 has biased composition (pro residues); the sequence is GPPPPPPGPPPPPVP. Low complexity predominate over residues 244–253; the sequence is TSSGSDDSAS. The residue at position 287 (lysine 287) is an N6-methyllysine. Phosphoserine is present on residues serine 290, serine 295, and serine 301. The disordered stretch occupies residues 290-312; it reads SGLIRSGPKPFSASKPDPPKPVA. The 144-residue stretch at 307 to 450 folds into the C-CAP/cofactor C-like domain; it reads PPKPVAKKEP…EGGDFNEFPV (144 aa). Lysine 345 is covalently cross-linked (Glycyl lysine isopeptide (Lys-Gly) (interchain with G-Cter in SUMO1)).

It belongs to the CAP family. In terms of assembly, homodimer. Binds actin monomers.

It is found in the cell membrane. Its function is as follows. Directly regulates filament dynamics and has been implicated in a number of complex developmental and morphological processes, including mRNA localization and the establishment of cell polarity. In Bos taurus (Bovine), this protein is Adenylyl cyclase-associated protein 1 (CAP1).